A 506-amino-acid chain; its full sequence is MNTMTLTPGQLSLSQLYDVWRHPVQLRLDASAIDGINASVACVNDIVAEGRTAYGINTGFGLLAQTRIADEDLQNLQRSLVLSHAAGVGDPLDDAMVRLIMVLKINSLARGFSGIRLSVIEALIALVNAGVYPLIPAKGSVGASGDLAPLAHLSLTLLGEGKARWQGEWLPAQAALKKAGLEPVALAAKEGLALLNGTQASTAFALRGLFEAQELFASAVVCGALTTEAVLGSRRPFDARIHAARGQQGQIDAARLFRHLLTDTSAIAESHHHCHKVQDPYSLRCQPQVMGACLTQLRQTKEVLLAEANAVSDNPLVFADAGEVISGGNFHAEPVAMAADNLALAIAEIGALSERRIALMMDKHMSQLPPFLVKNGGVNSGFMIAQVTAAALASENKALAHPHSVDSLPTSANQEDHVSMAPAAGRRLWEMAANTRGIIAVEWLAACQGIDLREGLTSSPLLEQARQTLRERVAHYTQDRFFAPDIECATTLLAQGALQRLLPDFM.

The 5-imidazolinone (Ala-Gly) cross-link spans 143–145 (ASG). Serine 144 carries the post-translational modification 2,3-didehydroalanine (Ser).

It belongs to the PAL/histidase family. In terms of processing, contains an active site 4-methylidene-imidazol-5-one (MIO), which is formed autocatalytically by cyclization and dehydration of residues Ala-Ser-Gly.

The protein localises to the cytoplasm. It carries out the reaction L-histidine = trans-urocanate + NH4(+). It functions in the pathway amino-acid degradation; L-histidine degradation into L-glutamate; N-formimidoyl-L-glutamate from L-histidine: step 1/3. The protein is Histidine ammonia-lyase of Salmonella paratyphi A (strain ATCC 9150 / SARB42).